Here is a 238-residue protein sequence, read N- to C-terminus: Tetrahydromethanopterin S-methyltransferase subunit A 1 (238 aa).

The Cytoplasmic segment spans residues 2–218; that stretch reads VEKKSPAEGW…RMFAGMYSGK (217 aa). Residue His84 coordinates 5-hydroxybenzimidazolylcob(I)amide. The helical transmembrane segment at 219–237 threads the bilayer; the sequence is VQGIMIGLAFTLTLGILLL. Val238 is a topological domain (extracellular).

It belongs to the MtrA family. As to quaternary structure, the complex is composed of 8 subunits; MtrA, MtrB, MtrC, MtrD, MtrE, MtrF, MtrG and MtrH. 5-hydroxybenzimidazolylcob(I)amide serves as cofactor.

The protein resides in the cell membrane. It carries out the reaction 5-methyl-5,6,7,8-tetrahydromethanopterin + coenzyme M + 2 Na(+)(in) = 5,6,7,8-tetrahydromethanopterin + methyl-coenzyme M + 2 Na(+)(out). Its pathway is one-carbon metabolism; methanogenesis from CO(2); methyl-coenzyme M from 5,10-methylene-5,6,7,8-tetrahydromethanopterin: step 2/2. In terms of biological role, part of a complex that catalyzes the formation of methyl-coenzyme M and tetrahydromethanopterin from coenzyme M and methyl-tetrahydromethanopterin. This is an energy-conserving, sodium-ion translocating step. This is Tetrahydromethanopterin S-methyltransferase subunit A 1 from Methanothermobacter thermautotrophicus (strain ATCC 29096 / DSM 1053 / JCM 10044 / NBRC 100330 / Delta H) (Methanobacterium thermoautotrophicum).